A 122-amino-acid polypeptide reads, in one-letter code: Small ribosomal subunit protein uS13 (122 aa).

Residues 99–122 (RGQRTHTNARTRKGPAKAIAGKKK) form a disordered region.

Belongs to the universal ribosomal protein uS13 family. In terms of assembly, part of the 30S ribosomal subunit. Forms a loose heterodimer with protein S19. Forms two bridges to the 50S subunit in the 70S ribosome.

Its function is as follows. Located at the top of the head of the 30S subunit, it contacts several helices of the 16S rRNA. In the 70S ribosome it contacts the 23S rRNA (bridge B1a) and protein L5 of the 50S subunit (bridge B1b), connecting the 2 subunits; these bridges are implicated in subunit movement. Contacts the tRNAs in the A and P-sites. The sequence is that of Small ribosomal subunit protein uS13 from Cereibacter sphaeroides (strain ATCC 17025 / ATH 2.4.3) (Rhodobacter sphaeroides).